A 144-amino-acid polypeptide reads, in one-letter code: Ribosome-binding factor A (144 aa).

A disordered region spans residues 120–144 (DKRRMAESGREEDDAAPDETTEDNA). Over residues 129 to 144 (REEDDAAPDETTEDNA) the composition is skewed to acidic residues.

This sequence belongs to the RbfA family. In terms of assembly, monomer. Binds 30S ribosomal subunits, but not 50S ribosomal subunits or 70S ribosomes.

It is found in the cytoplasm. Functionally, one of several proteins that assist in the late maturation steps of the functional core of the 30S ribosomal subunit. Associates with free 30S ribosomal subunits (but not with 30S subunits that are part of 70S ribosomes or polysomes). Required for efficient processing of 16S rRNA. May interact with the 5'-terminal helix region of 16S rRNA. The chain is Ribosome-binding factor A from Aeromonas hydrophila subsp. hydrophila (strain ATCC 7966 / DSM 30187 / BCRC 13018 / CCUG 14551 / JCM 1027 / KCTC 2358 / NCIMB 9240 / NCTC 8049).